A 154-amino-acid chain; its full sequence is UPF0127 protein TSIB_1463 (154 aa).

It belongs to the UPF0127 family.

The chain is UPF0127 protein TSIB_1463 from Thermococcus sibiricus (strain DSM 12597 / MM 739).